A 380-amino-acid polypeptide reads, in one-letter code: Histidinol-phosphate aminotransferase (380 aa).

Lys-235 is subject to N6-(pyridoxal phosphate)lysine.

The protein belongs to the class-II pyridoxal-phosphate-dependent aminotransferase family. Histidinol-phosphate aminotransferase subfamily. Homodimer. Requires pyridoxal 5'-phosphate as cofactor.

It carries out the reaction L-histidinol phosphate + 2-oxoglutarate = 3-(imidazol-4-yl)-2-oxopropyl phosphate + L-glutamate. It participates in amino-acid biosynthesis; L-histidine biosynthesis; L-histidine from 5-phospho-alpha-D-ribose 1-diphosphate: step 7/9. In Rhodococcus opacus (strain B4), this protein is Histidinol-phosphate aminotransferase.